The primary structure comprises 662 residues: DCC-interacting protein 13-beta (662 aa).

A required for RAB5A binding region spans residues 1–428 (MPAVDKLLLE…NSDIEDDNIV (428 aa)). The 266-residue stretch at 3–268 (AVDKLLLEEA…ESVYTPDIDV (266 aa)) folds into the BAR domain. One can recognise a PH domain in the interval 277-375 (LIQKTGYLNL…WICAVNNISR (99 aa)). A PID domain is found at 486–635 (SLLQQMFIVR…LMLSVPLTND (150 aa)). Residues 642–662 (NDQADDTGGSPSENRGAESEA) are disordered.

Homodimer. Homotetramer. Binds RAB5A/Rab5 through an N-terminal domain. This interaction is essential for its recruitment to endosomal membranes as well as its role in cell proliferation. Binds subunits of the NuRD/MeCP1 complex. Interacts with FSHR; interaction is independent of follicle stimulating hormone stimulation. Interacts with APPL1; the interaction is decreased by adiponectin in a time-dependent manner. Forms a complex comprising APPL1, RUVBL2, CTNNB1, HDAC1 and HDAC2; interaction reduces interaction between CTNNB1, HDAC1, HDAC2 and RUVBL2 leading to the decrease of deacetylase activity of this complex; affects the recruitment of repressive complexes to the Wnt target genes. Interacts (via BAR domain) with TBC1D1; interaction is dependent of TBC1D1 phosphorylation at 'Ser-235'; interaction diminishes the phosphorylation of TBC1D1 at 'Thr-596', resulting in inhibition of SLC2A4 translocation and glucose uptake. Interacts with ANXA2; targets APPL2 to endosomes and acting in parallel to RAB5A. Interacts with RAB31 (in GTP-bound form); interaction contributes to or enhances recruitment of APPL2 to the phagosomes; interaction enhances Fc-gamma receptor-mediated phagocytosis through PI3K/Akt signaling in macrophages. Interacts with PIK3R1; forms a complex with PIK3R1 and APPL1. Interacts (via BAR domain) with ADIPOR1; hinders the accessibility of APPL1 to ADIPOR1; negatively regulates adiponectin signaling; ADIPOQ dissociates this interaction and facilitates the recruitment of APPL1 to ADIPOR1. Interacts (via BAR domain) with ADIPOR2; ADIPOQ dissociates this interaction. As to expression, expressed in insulin-target tissues including skeletal muscle, liver, fat, and brain. Highly expressed in kidney and pancreas. Abundantly expressed in the ventromedial hypothalamus (VMH), barely detectable in the arcuate nucleus (ARC) and paraventricular nucleus (PVN) of the hypothalamus. Also expressed in pancreatic beta-cells.

The protein resides in the early endosome membrane. It is found in the nucleus. It localises to the cell membrane. The protein localises to the endosome membrane. Its subcellular location is the cytoplasm. The protein resides in the cytoplasmic vesicle. It is found in the phagosome. It localises to the cell projection. The protein localises to the ruffle. Its subcellular location is the ruffle membrane. The protein resides in the phagosome membrane. Its function is as follows. Multifunctional adapter protein that binds to various membrane receptors, nuclear factors and signaling proteins to regulate many processes, such as cell proliferation, immune response, endosomal trafficking and cell metabolism. Regulates signaling pathway leading to cell proliferation through interaction with RAB5A and subunits of the NuRD/MeCP1 complex. Plays a role in immune response by modulating phagocytosis, inflammatory and innate immune responses. In macrophages, enhances Fc-gamma receptor-mediated phagocytosis through interaction with RAB31 leading to activation of PI3K/Akt signaling. In response to LPS, modulates inflammatory responses by playing a key role on the regulation of TLR4 signaling and in the nuclear translocation of RELA/NF-kappa-B p65 and the secretion of pro- and anti-inflammatory cytokines. Also functions as a negative regulator of innate immune response via inhibition of AKT1 signaling pathway by forming a complex with APPL1 and PIK3R1. Plays a role in endosomal trafficking of TGFBR1 from the endosomes to the nucleus. Plays a role in cell metabolism by regulating adiponectin and insulin signaling pathways and adaptative thermogenesis. In muscle, negatively regulates adiponectin-simulated glucose uptake and fatty acid oxidation by inhibiting adiponectin signaling pathway through APPL1 sequestration thereby antagonizing APPL1 action. In muscles, negatively regulates insulin-induced plasma membrane recruitment of GLUT4 and glucose uptake through interaction with TBC1D1. Plays a role in cold and diet-induced adaptive thermogenesis by activating ventromedial hypothalamus (VMH) neurons throught AMPK inhibition which enhances sympathetic outflow to subcutaneous white adipose tissue (sWAT), sWAT beiging and cold tolerance. Also plays a role in other signaling pathways namely Wnt/beta-catenin, HGF and glucocorticoid receptor signaling. Positive regulator of beta-catenin/TCF-dependent transcription through direct interaction with RUVBL2/reptin resulting in the relief of RUVBL2-mediated repression of beta-catenin/TCF target genes by modulating the interactions within the beta-catenin-reptin-HDAC complex. May affect adult neurogenesis in hippocampus and olfactory system via regulating the sensitivity of glucocorticoid receptor. Required for fibroblast migration through HGF cell signaling. The polypeptide is DCC-interacting protein 13-beta (Mus musculus (Mouse)).